The primary structure comprises 1030 residues: Teashirt homolog 2 (1030 aa).

Residues 1–120 form a disordered region; the sequence is MPRRKQQAPK…THPKLPSEPH (120 aa). Residues 11–42 adopt a coiled-coil conformation; that stretch reads RAAGYAQEEVLKEEEEIKEEEEEEEDSGSVAQ. The segment covering 21 to 37 has biased composition (acidic residues); that stretch reads LKEEEEIKEEEEEEEDS. Composition is skewed to polar residues over residues 39 to 49 and 66 to 95; these read SVAQHQSSNDT and SCQNSPGSHLSNQDAENESLLSDASDQVSD. The span at 103 to 120 shows a compositional bias: basic and acidic residues; that stretch reads DVSDKKANTHPKLPSEPH. Residue Lys189 forms a Glycyl lysine isopeptide (Lys-Gly) (interchain with G-Cter in SUMO2) linkage. C2H2-type zinc fingers lie at residues 216–240 and 276–300; these read FRCRQCSAAYDTLVELTVHMNETGH and LKCMFCGDSFDSLQDLSVHMIKTKH. The segment at 240–266 is disordered; the sequence is HYQDDNRKKDKLRPTSYSKPRKRAFQD. Glycyl lysine isopeptide (Lys-Gly) (interchain with G-Cter in SUMO2) cross-links involve residues Lys307 and Lys316. The interval 328–348 is disordered; that stretch reads VNRPCSPDSTTGSLADSFSSQ. Polar residues predominate over residues 334–348; the sequence is PDSTTGSLADSFSSQ. The C2H2-type 3; atypical zinc finger occupies 381–405; sequence LKCMECGSSHDTLQQLTTHMMVTGH. Residue Lys418 forms a Glycyl lysine isopeptide (Lys-Gly) (interchain with G-Cter in SUMO2) linkage. Polar residues predominate over residues 432–459; that stretch reads SLSETPNSESLAPKPSSNSPSECTASTT. Positions 432–488 are disordered; that stretch reads SLSETPNSESLAPKPSSNSPSECTASTTELKKESKKEKGEGIEDEQGVKSEDYEDSL. The segment covering 460 to 482 has biased composition (basic and acidic residues); the sequence is ELKKESKKEKGEGIEDEQGVKSE. Glycyl lysine isopeptide (Lys-Gly) (interchain with G-Cter in SUMO2) cross-links involve residues Lys462, Lys480, Lys497, and Lys601. Composition is skewed to basic and acidic residues over residues 608-623 and 633-664; these read DEVVKQCGKESPHEEA and SFSKIEPPSESRKAEPCPLKEEEKPQKEKPEP. Disordered stretches follow at residues 608 to 687, 703 to 726, and 759 to 784; these read DEVV…LPSI, KATEPLRSPSCSSPNSSTSPVFHK, and QPIDLTKSKSKRAESSQAQSCTSPPQ. Lys652 participates in a covalent cross-link: Glycyl lysine isopeptide (Lys-Gly) (interchain with G-Cter in SUMO2). Positions 710–722 are enriched in low complexity; sequence SPSCSSPNSSTSP. The segment covering 773–783 has biased composition (polar residues); that stretch reads SSQAQSCTSPP. Glycyl lysine isopeptide (Lys-Gly) (interchain with G-Cter in SUMO2) cross-links involve residues Lys796 and Lys816. A DNA-binding region (homeobox) is located at residues 837-907; sequence RKGRQSNWNP…NVKYQLRKTG (71 aa). A C2H2-type 4 zinc finger spans residues 922-944; it reads FYCSDCASQFRTPSTYISHLESH. Lys962 is covalently cross-linked (Glycyl lysine isopeptide (Lys-Gly) (interchain with G-Cter in SUMO2)). 2 disordered regions span residues 965–987 and 1009–1030; these read QEISRVSSAQRSPETIAGEEDTD and LSKTHSKSPEHHSQFVADVDEE. The span at 968–977 shows a compositional bias: polar residues; that stretch reads SRVSSAQRSP. Ser976 carries the post-translational modification Phosphoserine. The segment at 990–1013 adopts a C2H2-type 5 zinc-finger fold; that stretch reads FKCKLCRRTFVSKHAVKLHLSKTH.

It belongs to the teashirt C2H2-type zinc-finger protein family. In terms of assembly, interacts (via homeobox domain) with APBB1 (via PID domain 1). In terms of processing, sumoylated.

Its subcellular location is the nucleus. Functionally, probable transcriptional regulator involved in developmental processes. May act as a transcriptional repressor (Potential). This chain is Teashirt homolog 2 (Tshz2), found in Mus musculus (Mouse).